Reading from the N-terminus, the 1011-residue chain is Phosphoenolpyruvate carboxylase (1011 aa).

Residues histidine 207 and lysine 658 contribute to the active site.

This sequence belongs to the PEPCase type 1 family. Mg(2+) is required as a cofactor.

It carries out the reaction oxaloacetate + phosphate = phosphoenolpyruvate + hydrogencarbonate. Forms oxaloacetate, a four-carbon dicarboxylic acid source for the tricarboxylic acid cycle. The polypeptide is Phosphoenolpyruvate carboxylase (ppc) (Thermosynechococcus vestitus (strain NIES-2133 / IAM M-273 / BP-1)).